The sequence spans 558 residues: Protein NRT1/ PTR FAMILY 2.7 (558 aa).

12 helical membrane passes run 31–51 (FMIA…LNLI), 63–83 (IAAA…PAVA), 90–110 (FFGT…GVAL), 140–162 (LGVL…FTLA), 178–198 (FFNW…TAIV), 204–224 (ISWT…FLVF), 319–339 (IIPL…QLSL), 357–377 (IPAG…IIVN), 399–419 (VGIG…VEAK), 440–460 (VLWL…HFPG), 479–499 (SITS…IDLI), and 518–538 (VYWI…VCSW).

It belongs to the major facilitator superfamily. Proton-dependent oligopeptide transporter (POT/PTR) (TC 2.A.17) family. Expressed in shoots and in the cortex of mature roots. Not expressed in root tip meristematic cells.

The protein resides in the cell membrane. Its function is as follows. Transporter involved in a passive nitrate efflux. Not competent for chloride transport. This Arabidopsis thaliana (Mouse-ear cress) protein is Protein NRT1/ PTR FAMILY 2.7 (NPF2.7).